A 931-amino-acid chain; its full sequence is Bifunctional glutamine synthetase adenylyltransferase/adenylyl-removing enzyme (931 aa).

An adenylyl removase region spans residues 1-434; sequence MTLAPADLPA…STEFAALLAP (434 aa). Positions 441–931 are adenylyl transferase; sequence PDALANYWRS…ACIAAELPFA (491 aa).

Belongs to the GlnE family. The cofactor is Mg(2+).

The catalysed reaction is [glutamine synthetase]-O(4)-(5'-adenylyl)-L-tyrosine + phosphate = [glutamine synthetase]-L-tyrosine + ADP. It carries out the reaction [glutamine synthetase]-L-tyrosine + ATP = [glutamine synthetase]-O(4)-(5'-adenylyl)-L-tyrosine + diphosphate. Functionally, involved in the regulation of glutamine synthetase GlnA, a key enzyme in the process to assimilate ammonia. When cellular nitrogen levels are high, the C-terminal adenylyl transferase (AT) inactivates GlnA by covalent transfer of an adenylyl group from ATP to specific tyrosine residue of GlnA, thus reducing its activity. Conversely, when nitrogen levels are low, the N-terminal adenylyl removase (AR) activates GlnA by removing the adenylyl group by phosphorolysis, increasing its activity. The regulatory region of GlnE binds the signal transduction protein PII (GlnB) which indicates the nitrogen status of the cell. This chain is Bifunctional glutamine synthetase adenylyltransferase/adenylyl-removing enzyme, found in Stenotrophomonas maltophilia (strain R551-3).